The chain runs to 233 residues: Large ribosomal subunit protein uL1 (233 aa).

Belongs to the universal ribosomal protein uL1 family. In terms of assembly, part of the 50S ribosomal subunit.

In terms of biological role, binds directly to 23S rRNA. The L1 stalk is quite mobile in the ribosome, and is involved in E site tRNA release. Its function is as follows. Protein L1 is also a translational repressor protein, it controls the translation of the L11 operon by binding to its mRNA. The protein is Large ribosomal subunit protein uL1 of Laribacter hongkongensis (strain HLHK9).